The chain runs to 437 residues: Epsilon-sarcoglycan (437 aa).

The Extracellular portion of the chain corresponds to 1–317; it reads MLLFWWWELG…LKSRDYYTDF (317 aa). An N-linked (GlcNAc...) asparagine glycan is attached at Asn200. The helical transmembrane segment at 318 to 338 threads the bilayer; that stretch reads LVTLAVPSAVALVLFLILAYI. At 339-437 the chain is on the cytoplasmic side; sequence MCCRREGVEK…QPQTTGKWYP (99 aa).

This sequence belongs to the sarcoglycan alpha/epsilon family. Post-translationally, N-glycosylated. In terms of processing, ubiquitinated, leading to its degradation by the proteasome. As to expression, identified in all tissues tested. Expression highest in lung and placenta, moderate in brain, heart and skeletal muscle, low in kidney and liver. Also detected in embryo.

It localises to the cell membrane. The protein localises to the sarcolemma. The protein resides in the golgi apparatus. It is found in the cell projection. Its subcellular location is the dendrite. It localises to the cytoplasm. The protein localises to the cytoskeleton. In terms of biological role, component of the sarcoglycan complex, a subcomplex of the dystrophin-glycoprotein complex which forms a link between the F-actin cytoskeleton and the extracellular matrix. This is Epsilon-sarcoglycan (Sgce) from Mus musculus (Mouse).